The chain runs to 887 residues: Pyruvate dehydrogenase E1 component (887 aa).

Mg(2+)-binding residues include D231, N261, and Q263. Position 716 is an N6-acetyllysine (K716).

In terms of assembly, homodimer. Part of the PDH complex, consisting of multiple copies of pyruvate dehydrogenase (E1), dihydrolipoamide acetyltransferase (E2) and lipoamide dehydrogenase (E3). It depends on Mg(2+) as a cofactor. Thiamine diphosphate is required as a cofactor.

It carries out the reaction N(6)-[(R)-lipoyl]-L-lysyl-[protein] + pyruvate + H(+) = N(6)-[(R)-S(8)-acetyldihydrolipoyl]-L-lysyl-[protein] + CO2. Its function is as follows. Component of the pyruvate dehydrogenase (PDH) complex, that catalyzes the overall conversion of pyruvate to acetyl-CoA and CO(2). The chain is Pyruvate dehydrogenase E1 component (aceE) from Escherichia coli O157:H7.